A 375-amino-acid chain; its full sequence is Putative prophage phiRv2 integrase (375 aa).

The Core-binding (CB) domain occupies 75–153; the sequence is APFGEYAEGW…LLRAIMQTAL (79 aa). Residues 175–364 form the Tyr recombinase domain; the sequence is HKIRPATLDE…AKGRDREIAA (190 aa). Active-site residues include R209, H316, R319, and H342. Y351 serves as the catalytic O-(3'-phospho-DNA)-tyrosine intermediate.

Belongs to the 'phage' integrase family.

Functionally, integrase is necessary for integration of the phage into the host genome by site-specific recombination. In conjunction with excisionase, integrase is also necessary for excision of the prophage from the host genome. The protein is Putative prophage phiRv2 integrase of Mycobacterium tuberculosis (strain CDC 1551 / Oshkosh).